A 217-amino-acid polypeptide reads, in one-letter code: uncharacterized protein (217 aa).

4 consecutive transmembrane segments (helical) span residues Ile9–Ile29, Phe54–Leu74, Leu103–Ser125, and Ile135–Ile157.

It belongs to the DP1 family.

Its subcellular location is the endoplasmic reticulum membrane. This is an uncharacterized protein from Schizosaccharomyces pombe (strain 972 / ATCC 24843) (Fission yeast).